The chain runs to 129 residues: Small ribosomal subunit protein uS8 (129 aa).

The protein belongs to the universal ribosomal protein uS8 family. Part of the 30S ribosomal subunit. Contacts proteins S5 and S12.

Its function is as follows. One of the primary rRNA binding proteins, it binds directly to 16S rRNA central domain where it helps coordinate assembly of the platform of the 30S subunit. This chain is Small ribosomal subunit protein uS8, found in Colwellia psychrerythraea (strain 34H / ATCC BAA-681) (Vibrio psychroerythus).